The chain runs to 667 residues: tRNA 5-methylaminomethyl-2-thiouridine biosynthesis bifunctional protein MnmC (667 aa).

The tract at residues 1–215 is tRNA (mnm(5)s(2)U34)-methyltransferase; that stretch reads MKFINGILFN…KREMIRAYFN (215 aa). Positions 240–667 are FAD-dependent cmnm(5)s(2)U34 oxidoreductase; sequence IGAGIAGIVT…LIRKLKKGLK (428 aa).

The protein in the N-terminal section; belongs to the methyltransferase superfamily. tRNA (mnm(5)s(2)U34)-methyltransferase family. In the C-terminal section; belongs to the DAO family. Requires FAD as cofactor.

It localises to the cytoplasm. It catalyses the reaction 5-aminomethyl-2-thiouridine(34) in tRNA + S-adenosyl-L-methionine = 5-methylaminomethyl-2-thiouridine(34) in tRNA + S-adenosyl-L-homocysteine + H(+). Catalyzes the last two steps in the biosynthesis of 5-methylaminomethyl-2-thiouridine (mnm(5)s(2)U) at the wobble position (U34) in tRNA. Catalyzes the FAD-dependent demodification of cmnm(5)s(2)U34 to nm(5)s(2)U34, followed by the transfer of a methyl group from S-adenosyl-L-methionine to nm(5)s(2)U34, to form mnm(5)s(2)U34. The protein is tRNA 5-methylaminomethyl-2-thiouridine biosynthesis bifunctional protein MnmC of Campylobacter hominis (strain ATCC BAA-381 / DSM 21671 / CCUG 45161 / LMG 19568 / NCTC 13146 / CH001A).